We begin with the raw amino-acid sequence, 268 residues long: Glutamate racemase (268 aa).

Substrate contacts are provided by residues 10 to 11 (DS) and 42 to 43 (YG). Cys73 serves as the catalytic Proton donor/acceptor. Residue 74–75 (NT) participates in substrate binding. Catalysis depends on Cys184, which acts as the Proton donor/acceptor. 185–186 (TH) contributes to the substrate binding site.

Belongs to the aspartate/glutamate racemases family.

It catalyses the reaction L-glutamate = D-glutamate. It participates in cell wall biogenesis; peptidoglycan biosynthesis. Provides the (R)-glutamate required for cell wall biosynthesis. The protein is Glutamate racemase of Limosilactobacillus fermentum (strain NBRC 3956 / LMG 18251) (Lactobacillus fermentum).